The chain runs to 269 residues: Shikimate dehydrogenase (NADP(+)) (269 aa).

Shikimate contacts are provided by residues S14 to S16 and T61. Catalysis depends on K65, which acts as the Proton acceptor. E77 contributes to the NADP(+) binding site. Residues N86 and D102 each contribute to the shikimate site. NADP(+) is bound by residues G126–A130, N150–K155, and M213. Y215 contacts shikimate. G237 provides a ligand contact to NADP(+).

This sequence belongs to the shikimate dehydrogenase family. Homodimer.

It carries out the reaction shikimate + NADP(+) = 3-dehydroshikimate + NADPH + H(+). It functions in the pathway metabolic intermediate biosynthesis; chorismate biosynthesis; chorismate from D-erythrose 4-phosphate and phosphoenolpyruvate: step 4/7. Involved in the biosynthesis of the chorismate, which leads to the biosynthesis of aromatic amino acids. Catalyzes the reversible NADPH linked reduction of 3-dehydroshikimate (DHSA) to yield shikimate (SA). The sequence is that of Shikimate dehydrogenase (NADP(+)) from Aliivibrio fischeri (strain ATCC 700601 / ES114) (Vibrio fischeri).